The chain runs to 132 residues: Small ribosomal subunit protein uS11 (132 aa).

A disordered region spans residues isoleucine 110 to leucine 132. The span at arginine 123–leucine 132 shows a compositional bias: basic residues.

It belongs to the universal ribosomal protein uS11 family. As to quaternary structure, component of the small ribosomal subunit. Mature ribosomes consist of a small (40S) and a large (60S) subunit. The 40S subunit contains about 32 different proteins and 1 molecule of RNA (18S). The 60S subunit contains 45 different proteins and 3 molecules of RNA (25S, 5.8S and 5S).

The protein localises to the cytoplasm. In terms of biological role, component of the ribosome, a large ribonucleoprotein complex responsible for the synthesis of proteins in the cell. The small ribosomal subunit (SSU) binds messenger RNAs (mRNAs) and translates the encoded message by selecting cognate aminoacyl-transfer RNA (tRNA) molecules. The large subunit (LSU) contains the ribosomal catalytic site termed the peptidyl transferase center (PTC), which catalyzes the formation of peptide bonds, thereby polymerizing the amino acids delivered by tRNAs into a polypeptide chain. The nascent polypeptides leave the ribosome through a tunnel in the LSU and interact with protein factors that function in enzymatic processing, targeting, and the membrane insertion of nascent chains at the exit of the ribosomal tunnel. RPS14B is involved in nucleolar processing of pre-18S ribosomal RNA and ribosome assembly. This chain is Small ribosomal subunit protein uS11 (RPS14B), found in Candida albicans (strain SC5314 / ATCC MYA-2876) (Yeast).